Reading from the N-terminus, the 353-residue chain is Photosystem II D2 protein (353 aa).

Thr-2 carries the post-translational modification N-acetylthreonine. A Phosphothreonine modification is found at Thr-2. Residues 41-61 (CAYFALGGWLTGTTFVTSWYT) traverse the membrane as a helical segment. A chlorophyll a-binding site is contributed by His-118. Residues 125 to 141 (GFMLRQFEIARSVGLRP) form a helical membrane-spanning segment. Positions 130 and 143 each coordinate pheophytin a. A helical transmembrane segment spans residues 153-166 (VFVSVFLIYPLGQS). His-198 contributes to the chlorophyll a binding site. Residues 208 to 228 (AALLCAIHGATVENTIFEDGD) traverse the membrane as a helical segment. Residues His-215 and Phe-262 each contribute to the a plastoquinone site. Fe cation is bound at residue His-215. His-269 serves as a coordination point for Fe cation. A helical membrane pass occupies residues 279-295 (GLWMSAIGVVGLALNLR).

It belongs to the reaction center PufL/M/PsbA/D family. In terms of assembly, PSII is composed of 1 copy each of membrane proteins PsbA, PsbB, PsbC, PsbD, PsbE, PsbF, PsbH, PsbI, PsbJ, PsbK, PsbL, PsbM, PsbT, PsbX, PsbY, PsbZ, Psb30/Ycf12, at least 3 peripheral proteins of the oxygen-evolving complex and a large number of cofactors. It forms dimeric complexes. The cofactor is The D1/D2 heterodimer binds P680, chlorophylls that are the primary electron donor of PSII, and subsequent electron acceptors. It shares a non-heme iron and each subunit binds pheophytin, quinone, additional chlorophylls, carotenoids and lipids. There is also a Cl(-1) ion associated with D1 and D2, which is required for oxygen evolution. The PSII complex binds additional chlorophylls, carotenoids and specific lipids..

The protein localises to the plastid. The protein resides in the chloroplast thylakoid membrane. It catalyses the reaction 2 a plastoquinone + 4 hnu + 2 H2O = 2 a plastoquinol + O2. Functionally, photosystem II (PSII) is a light-driven water:plastoquinone oxidoreductase that uses light energy to abstract electrons from H(2)O, generating O(2) and a proton gradient subsequently used for ATP formation. It consists of a core antenna complex that captures photons, and an electron transfer chain that converts photonic excitation into a charge separation. The D1/D2 (PsbA/PsbD) reaction center heterodimer binds P680, the primary electron donor of PSII as well as several subsequent electron acceptors. D2 is needed for assembly of a stable PSII complex. The protein is Photosystem II D2 protein of Staurastrum punctulatum (Green alga).